The sequence spans 124 residues: Large ribosomal subunit protein bL12 (124 aa).

This sequence belongs to the bacterial ribosomal protein bL12 family. As to quaternary structure, homodimer. Part of the ribosomal stalk of the 50S ribosomal subunit. Forms a multimeric L10(L12)X complex, where L10 forms an elongated spine to which 2 to 4 L12 dimers bind in a sequential fashion. Binds GTP-bound translation factors.

In terms of biological role, forms part of the ribosomal stalk which helps the ribosome interact with GTP-bound translation factors. Is thus essential for accurate translation. The polypeptide is Large ribosomal subunit protein bL12 (Cereibacter sphaeroides (strain ATCC 17025 / ATH 2.4.3) (Rhodobacter sphaeroides)).